The sequence spans 1589 residues: Paternally-expressed gene 3 protein (1589 aa).

The region spanning 46-128 (HQRFRNLIYV…TLLENYKEMY (83 aa)) is the SCAN box domain. Disordered regions lie at residues 128–230 (YQPE…ESYQ), 266–306 (DGHS…RRGI), and 319–349 (KFIKDVSRSSKSGRARESSDRSQRFPRMSDD). The span at 129-142 (QPEDDNNSDVTSDD) shows a compositional bias: acidic residues. Composition is skewed to basic and acidic residues over residues 143 to 152 (DMTRNRRESS), 161 to 182 (SGDRDWDRRGRSRDMEPRDRWS), 206 to 225 (FEMDRDDDRDSRAYESRSQD), and 295 to 306 (PEAKKSTHRRGI). C2H2-type zinc fingers lie at residues 454–476 (YVCDECGRSFSVISEFVEHQIMH), 507–529 (FECKDCGETFNKSAALAEHRKIH), and 565–587 (YECRVCKETFLHSSALIEHQKIH). A compositionally biased stretch (basic and acidic residues) spans 588 to 607 (FGDDKDNEREHERERERGET). The disordered stretch occupies residues 588–610 (FGDDKDNEREHERERERGETFRP). The segment at 627–649 (YECKVCGETFLHSSSLKEHQKIH) adopts a C2H2-type 4 zinc-finger fold. Residues 838 to 930 (LVASKPPRSH…EFSVPSSNVR (93 aa)) are disordered. Over residues 868–881 (LNDKRQKIPARENP) the composition is skewed to basic and acidic residues. Residues 969–991 (YECQECGECFAHSSDLTEHQKIH) form a C2H2-type 5 zinc finger. Residues 1056–1104 (EKSHGEESQGENTDGEETHSEETHGQETIEDPVIQSSDMEDPQKDDPDD) are disordered. Positions 1071–1082 (EETHSEETHGQE) are enriched in basic and acidic residues. C2H2-type zinc fingers lie at residues 1107-1129 (YECEDCGLGFVDLTDLTDHQKVH), 1163-1185 (YECPKCGESFIHSSFLFEHQRIH), 1225-1247 (IRCLLCGQGFIHSSALNEHMRLH), 1282-1304 (FECAVCGESFVNPAELADHVTVH), and 1332-1354 (YECKDCGKSFIHSTVLTKHKELH). Acidic residues predominate over residues 1396-1416 (AEPEVEAAEPEVEAAEPEVEA). The segment at 1396-1496 (AEPEVEAAEP…GIEDPEEGED (101 aa)) is disordered. 7 consecutive repeat copies span residues 1398–1404 (PEVEAAE), 1405–1411 (PEVEAAE), 1412–1418 (PEVEAAE), 1419–1423 (PNGEA), 1426–1430 (PDGEA), 1433–1437 (PIGEA), and 1440–1444 (PNGEA). Residues 1398–1418 (PEVEAAEPEVEAAEPEVEAAE) form a 3 X 7 AA repeat of P-E-V-E-A-A-E region. The interval 1419–1444 (PNGEAEGPDGEAAEPIGEAGQPNGEA) is 4 X 5 AA repeat of P-X-G-E-A. Acidic residues-rich tracts occupy residues 1450-1467 (DADEPDGAGIEDPEERAE) and 1476-1496 (PEGDADEPDGVGIEDPEEGED). C2H2-type zinc fingers lie at residues 1506–1528 (YDCHECTETFTSSTAFGEHLKTH) and 1565–1587 (FKCDVCGQLFNDRLSLARHQNTH).

It belongs to the krueppel C2H2-type zinc-finger protein family. Homodimer. Interacts with SIAH1A and SIAH2. Interacts with TRAF2.

The protein resides in the nucleus. The protein localises to the cytoplasm. In terms of biological role, induces apoptosis in cooperation with SIAH1A. Acts as a mediator between p53/TP53 and BAX in a neuronal death pathway that is activated by DNA damage. Acts synergistically with TRAF2 and inhibits TNF induced apoptosis through activation of NF-kappa-B. The chain is Paternally-expressed gene 3 protein (PEG3) from Gorilla gorilla gorilla (Western lowland gorilla).